The sequence spans 363 residues: Chorismate synthase (363 aa).

The interval 44–63 (DLDRRKPGTSRHTTQRQEPD) is disordered. Residues Arg-48 and Arg-54 each contribute to the NADP(+) site. Residues 125 to 127 (RSS), 237 to 238 (NA), Gly-277, 292 to 296 (KPTSS), and Arg-318 contribute to the FMN site.

It belongs to the chorismate synthase family. Homotetramer. FMNH2 is required as a cofactor.

The enzyme catalyses 5-O-(1-carboxyvinyl)-3-phosphoshikimate = chorismate + phosphate. It functions in the pathway metabolic intermediate biosynthesis; chorismate biosynthesis; chorismate from D-erythrose 4-phosphate and phosphoenolpyruvate: step 7/7. Functionally, catalyzes the anti-1,4-elimination of the C-3 phosphate and the C-6 proR hydrogen from 5-enolpyruvylshikimate-3-phosphate (EPSP) to yield chorismate, which is the branch point compound that serves as the starting substrate for the three terminal pathways of aromatic amino acid biosynthesis. This reaction introduces a second double bond into the aromatic ring system. In Pseudomonas fluorescens (strain ATCC BAA-477 / NRRL B-23932 / Pf-5), this protein is Chorismate synthase.